The following is a 391-amino-acid chain: Chorismate synthase (391 aa).

Arginine 48 contributes to the NADP(+) binding site. FMN is bound by residues 126-128, glycine 286, 301-305, and arginine 328; these read RAS and KPTSS.

It belongs to the chorismate synthase family. Requires FMNH2 as cofactor.

The catalysed reaction is 5-O-(1-carboxyvinyl)-3-phosphoshikimate = chorismate + phosphate. It participates in metabolic intermediate biosynthesis; chorismate biosynthesis; chorismate from D-erythrose 4-phosphate and phosphoenolpyruvate: step 7/7. Functionally, catalyzes the anti-1,4-elimination of the C-3 phosphate and the C-6 proR hydrogen from 5-enolpyruvylshikimate-3-phosphate (EPSP) to yield chorismate, which is the branch point compound that serves as the starting substrate for the three terminal pathways of aromatic amino acid biosynthesis. This reaction introduces a second double bond into the aromatic ring system. The protein is Chorismate synthase of Saccharolobus islandicus (strain L.S.2.15 / Lassen #1) (Sulfolobus islandicus).